The sequence spans 64 residues: Large ribosomal subunit protein bL35 (64 aa).

Composition is skewed to basic residues over residues 1 to 15 (MPKQ…KRFR) and 23 to 43 (VRQK…RTRR). Residues 1–64 (MPKQKSHSGA…AGRIKRLLAR (64 aa)) are disordered.

This sequence belongs to the bacterial ribosomal protein bL35 family.

In Frankia alni (strain DSM 45986 / CECT 9034 / ACN14a), this protein is Large ribosomal subunit protein bL35.